A 629-amino-acid polypeptide reads, in one-letter code: tRNA uridine 5-carboxymethylaminomethyl modification enzyme MnmG (629 aa).

FAD contacts are provided by residues 13-18 (GGGHAG), V125, and S180. 273 to 287 (GPRYCPSIEDKVMRF) contacts NAD(+). An FAD-binding site is contributed by Q370.

The protein belongs to the MnmG family. As to quaternary structure, homodimer. Heterotetramer of two MnmE and two MnmG subunits. FAD serves as cofactor.

The protein localises to the cytoplasm. Functionally, NAD-binding protein involved in the addition of a carboxymethylaminomethyl (cmnm) group at the wobble position (U34) of certain tRNAs, forming tRNA-cmnm(5)s(2)U34. In Shigella flexneri serotype 5b (strain 8401), this protein is tRNA uridine 5-carboxymethylaminomethyl modification enzyme MnmG.